Consider the following 499-residue polypeptide: WD repeat-containing protein 55 homolog (499 aa).

The interval 1 to 130 is disordered; that stretch reads MHTHNNFKTP…EATFDLDVDD (130 aa). Acidic residues-rich tracts occupy residues 12–23 and 31–48; these read DEDELDDLDEDM and IEQE…EYDL. Over residues 91 to 103 the composition is skewed to low complexity; sequence DDAGGASAGGATS. The span at 113–122 shows a compositional bias: polar residues; the sequence is PSGSNRQSEA. 6 WD repeats span residues 154–193, 198–237, 241–279, 282–321, 324–363, and 408–447; these read KLED…NKLL, VHSK…LKKL, AHDD…AIFE, ELED…MYVQ, PYEE…YHCD, and QHNM…DFGD. Residues 480-499 are disordered; that stretch reads TKEDADDDDHDPSAGPSNMA.

This sequence belongs to the WD repeat WDR55 family.

The sequence is that of WD repeat-containing protein 55 homolog from Drosophila yakuba (Fruit fly).